A 505-amino-acid chain; its full sequence is 2,3-bisphosphoglycerate-independent phosphoglycerate mutase (505 aa).

Mn(2+) contacts are provided by D12 and S62. Catalysis depends on S62, which acts as the Phosphoserine intermediate. Substrate contacts are provided by residues H123, 153–154 (RD), R185, R191, 257–260 (RPDR), and K330. Mn(2+)-binding residues include D397, H401, D438, H439, and H456.

This sequence belongs to the BPG-independent phosphoglycerate mutase family. As to quaternary structure, monomer. Mn(2+) is required as a cofactor.

The catalysed reaction is (2R)-2-phosphoglycerate = (2R)-3-phosphoglycerate. It functions in the pathway carbohydrate degradation; glycolysis; pyruvate from D-glyceraldehyde 3-phosphate: step 3/5. Functionally, catalyzes the interconversion of 2-phosphoglycerate and 3-phosphoglycerate. The chain is 2,3-bisphosphoglycerate-independent phosphoglycerate mutase from Staphylococcus epidermidis (strain ATCC 35984 / DSM 28319 / BCRC 17069 / CCUG 31568 / BM 3577 / RP62A).